The primary structure comprises 274 residues: Large ribosomal subunit protein uL2 (274 aa).

Disordered regions lie at residues 30 to 54 (EKSLAFGKKSSGGRNNNGRITIRHK) and 223 to 274 (VAMN…QLKG). Residues 36–48 (GKKSSGGRNNNGR) are compositionally biased toward low complexity. Residues 263-274 (KFSDKYIKQLKG) show a composition bias toward basic and acidic residues.

The protein belongs to the universal ribosomal protein uL2 family. In terms of assembly, part of the 50S ribosomal subunit. Forms a bridge to the 30S subunit in the 70S ribosome.

In terms of biological role, one of the primary rRNA binding proteins. Required for association of the 30S and 50S subunits to form the 70S ribosome, for tRNA binding and peptide bond formation. It has been suggested to have peptidyltransferase activity; this is somewhat controversial. Makes several contacts with the 16S rRNA in the 70S ribosome. The polypeptide is Large ribosomal subunit protein uL2 (Wolbachia sp. subsp. Brugia malayi (strain TRS)).